The following is a 338-amino-acid chain: 5-dehydro-2-deoxygluconokinase (338 aa).

The protein belongs to the carbohydrate kinase PfkB family.

It catalyses the reaction 5-dehydro-2-deoxy-D-gluconate + ATP = 6-phospho-5-dehydro-2-deoxy-D-gluconate + ADP + H(+). The protein operates within polyol metabolism; myo-inositol degradation into acetyl-CoA; acetyl-CoA from myo-inositol: step 5/7. Functionally, catalyzes the phosphorylation of 5-dehydro-2-deoxy-D-gluconate (2-deoxy-5-keto-D-gluconate or DKG) to 6-phospho-5-dehydro-2-deoxy-D-gluconate (DKGP). The sequence is that of 5-dehydro-2-deoxygluconokinase from Mesomycoplasma hyopneumoniae (strain J / ATCC 25934 / NCTC 10110) (Mycoplasma hyopneumoniae).